The sequence spans 742 residues: Protein-associating with the carboxyl-terminal domain of ezrin (742 aa).

Residue glycine 2 is the site of N-myristoyl glycine attachment. Positions 2-245 (GSENSALKSY…LCTLLSHDFF (244 aa)) constitute a Protein kinase domain. 4 HEAT repeats span residues 199–238 (ESLL…ALCT), 285–323 (LIAS…HAQG), 333–370 (LFQS…HFTQ), and 372–409 (QLKK…LLGP). Position 439 is a phosphoserine (serine 439). Disordered regions lie at residues 506-544 (LSDV…QTVN), 568-598 (SSWD…TSGE), and 629-652 (GDDA…VPSE). Over residues 529–539 (WPDWSEPEEPE) the composition is skewed to acidic residues. Residues 548-742 (WPREPCDDVK…GELNWEDNNW (195 aa)) are interaction with EZR. Serine 707 bears the Phosphoserine mark. The tract at residues 723-742 (EGEAEGWEEEGELNWEDNNW) is disordered.

It belongs to the protein kinase superfamily. As to quaternary structure, interacts with EZR/VIL2 C-terminal domain. In terms of processing, may be myristoylated; myristoylation may target it to Golgi compartment. Post-translationally, phosphorylated. As to expression, ubiquitously expressed.

It is found in the cytoplasm. It localises to the golgi apparatus. Its subcellular location is the cell projection. The protein resides in the lamellipodium. May play a role in regulating cell adhesion/migration complexes in migrating cells. In Homo sapiens (Human), this protein is Protein-associating with the carboxyl-terminal domain of ezrin (SCYL3).